A 146-amino-acid chain; its full sequence is D-aminoacyl-tRNA deacylase (146 aa).

A Gly-cisPro motif, important for rejection of L-amino acids motif is present at residues 137-138 (GP).

It belongs to the DTD family. In terms of assembly, homodimer.

It is found in the cytoplasm. The catalysed reaction is glycyl-tRNA(Ala) + H2O = tRNA(Ala) + glycine + H(+). The enzyme catalyses a D-aminoacyl-tRNA + H2O = a tRNA + a D-alpha-amino acid + H(+). Its function is as follows. An aminoacyl-tRNA editing enzyme that deacylates mischarged D-aminoacyl-tRNAs. Also deacylates mischarged glycyl-tRNA(Ala), protecting cells against glycine mischarging by AlaRS. Acts via tRNA-based rather than protein-based catalysis; rejects L-amino acids rather than detecting D-amino acids in the active site. By recycling D-aminoacyl-tRNA to D-amino acids and free tRNA molecules, this enzyme counteracts the toxicity associated with the formation of D-aminoacyl-tRNA entities in vivo and helps enforce protein L-homochirality. The protein is D-aminoacyl-tRNA deacylase of Variovorax paradoxus (strain S110).